A 444-amino-acid polypeptide reads, in one-letter code: Signal recognition particle 54 kDa protein (444 aa).

Residues 106–113, 187–191, and 245–248 contribute to the GTP site; these read GLQGSGKT, DTAGR, and SKLD.

This sequence belongs to the GTP-binding SRP family. SRP54 subfamily. Part of the signal recognition particle protein translocation system, which is composed of SRP and FtsY. Archaeal SRP consists of a 7S RNA molecule of 300 nucleotides and two protein subunits: SRP54 and SRP19.

It is found in the cytoplasm. The enzyme catalyses GTP + H2O = GDP + phosphate + H(+). Functionally, involved in targeting and insertion of nascent membrane proteins into the cytoplasmic membrane. Binds to the hydrophobic signal sequence of the ribosome-nascent chain (RNC) as it emerges from the ribosomes. The SRP-RNC complex is then targeted to the cytoplasmic membrane where it interacts with the SRP receptor FtsY. This chain is Signal recognition particle 54 kDa protein, found in Methanosphaera stadtmanae (strain ATCC 43021 / DSM 3091 / JCM 11832 / MCB-3).